Consider the following 233-residue polypeptide: Esterase FUS5 (233 aa).

Residues S105, D159, and H187 each act as charge relay system in the active site.

Belongs to the LovG family.

Functionally, esterase; part of the gene cluster that mediates the biosynthesis of the mycotoxin fusarin C. Within the cluster, FUS1, FUS2, FUS8 and FUS9 are sufficient for fusarin production. The other FUS cluster members are not essential for fusarin C biosynthesis. This Gibberella moniliformis (strain M3125 / FGSC 7600) (Maize ear and stalk rot fungus) protein is Esterase FUS5.